Here is a 142-residue protein sequence, read N- to C-terminus: Ribonuclease VapC31 (142 aa).

Residues 3 to 139 (LLDANVLLAA…ARFASVRHIR (137 aa)) enclose the PINc domain. Mg(2+) is bound by residues Asp5 and Asp108.

Belongs to the PINc/VapC protein family. Requires Mg(2+) as cofactor.

In terms of biological role, toxic component of a type II toxin-antitoxin (TA) system. An RNase. Its toxic effect is neutralized by coexpression with cognate antitoxin VapB31. In Mycobacterium tuberculosis (strain CDC 1551 / Oshkosh), this protein is Ribonuclease VapC31.